Here is a 266-residue protein sequence, read N- to C-terminus: Glucosamine-6-phosphate deaminase (266 aa).

Aspartate 72 acts as the Proton acceptor; for enolization step in catalysis. The active-site For ring-opening step is the aspartate 141. The active-site Proton acceptor; for ring-opening step is histidine 143. Catalysis depends on glutamate 148, which acts as the For ring-opening step.

It belongs to the glucosamine/galactosamine-6-phosphate isomerase family. NagB subfamily. As to quaternary structure, homohexamer.

The enzyme catalyses alpha-D-glucosamine 6-phosphate + H2O = beta-D-fructose 6-phosphate + NH4(+). The protein operates within amino-sugar metabolism; N-acetylneuraminate degradation; D-fructose 6-phosphate from N-acetylneuraminate: step 5/5. Allosterically activated by N-acetylglucosamine 6-phosphate (GlcNAc6P). Functionally, catalyzes the reversible isomerization-deamination of glucosamine 6-phosphate (GlcN6P) to form fructose 6-phosphate (Fru6P) and ammonium ion. This is Glucosamine-6-phosphate deaminase from Cronobacter sakazakii (strain ATCC BAA-894) (Enterobacter sakazakii).